The sequence spans 222 residues: Acyl-protein thioesterase 1 homolog 2 (222 aa).

Catalysis depends on charge relay system residues S116, D169, and H202.

It belongs to the AB hydrolase superfamily. AB hydrolase 2 family.

The protein resides in the cytoplasm. It is found in the nucleus. The catalysed reaction is S-hexadecanoyl-L-cysteinyl-[protein] + H2O = L-cysteinyl-[protein] + hexadecanoate + H(+). Its function is as follows. Hydrolyzes fatty acids from S-acylated cysteine residues in proteins with a strong preference for palmitoylated G-alpha proteins over other acyl substrates. Mediates the deacylation of G-alpha proteins such as GPA1 in vivo, but has weak or no activity toward palmitoylated Ras proteins. Has weak lysophospholipase activity in vitro; however such activity may not exist in vivo. This chain is Acyl-protein thioesterase 1 homolog 2, found in Dictyostelium discoideum (Social amoeba).